The primary structure comprises 57 residues: UPF0337 protein SCO0678 (57 aa).

2 stretches are compositionally biased toward basic and acidic residues: residues 1 to 22 (MAGN…KEAA) and 42 to 57 (GDAR…VFRH). The disordered stretch occupies residues 1-57 (MAGNEKSRAKMEQAKGKAKEAAGRAVGNERMTAEGRAAQSKGDARQAKEKGKDVFRH).

The protein belongs to the UPF0337 (CsbD) family.

This chain is UPF0337 protein SCO0678, found in Streptomyces coelicolor (strain ATCC BAA-471 / A3(2) / M145).